We begin with the raw amino-acid sequence, 130 residues long: Small ribosomal subunit protein uS9 (130 aa).

The protein belongs to the universal ribosomal protein uS9 family.

This chain is Small ribosomal subunit protein uS9, found in Cupriavidus metallidurans (strain ATCC 43123 / DSM 2839 / NBRC 102507 / CH34) (Ralstonia metallidurans).